We begin with the raw amino-acid sequence, 242 residues long: tRNA (guanine-N(1)-)-methyltransferase (242 aa).

S-adenosyl-L-methionine is bound by residues Gly-108 and Ile-127 to Leu-132.

The protein belongs to the RNA methyltransferase TrmD family. As to quaternary structure, homodimer.

It localises to the cytoplasm. It carries out the reaction guanosine(37) in tRNA + S-adenosyl-L-methionine = N(1)-methylguanosine(37) in tRNA + S-adenosyl-L-homocysteine + H(+). Its function is as follows. Specifically methylates guanosine-37 in various tRNAs. The protein is tRNA (guanine-N(1)-)-methyltransferase of Lactobacillus acidophilus (strain ATCC 700396 / NCK56 / N2 / NCFM).